Consider the following 583-residue polypeptide: Protein translocase subunit SecD (583 aa).

A run of 6 helical transmembrane segments spans residues 7–27, 419–439, 446–468, 469–489, 511–531, and 538–558; these read FGVVLVVLAACSGFLFPTLQW, LVWGLCAVLLFMLVWYQEAGV, LLNLYIMFGVLSAFNLTLTLSSI, AGMILTIGMAVDANVVVFERI, FWAIMDSNVTTFIAALFLSVL, and GFAYSLAIGVVSSVFTALFVS.

It belongs to the SecD/SecF family. SecD subfamily. As to quaternary structure, forms a complex with SecF. Part of the essential Sec protein translocation apparatus which comprises SecA, SecYEG and auxiliary proteins SecDF. Other proteins may also be involved.

Its subcellular location is the cell inner membrane. Part of the Sec protein translocase complex. Interacts with the SecYEG preprotein conducting channel. SecDF uses the proton motive force (PMF) to complete protein translocation after the ATP-dependent function of SecA. The polypeptide is Protein translocase subunit SecD (Treponema pallidum (strain Nichols)).